Reading from the N-terminus, the 199-residue chain is Phosphoheptose isomerase (199 aa).

An SIS domain is found at 36-198 (MAQCLLNEHK…DRKLIPSSED (163 aa)). 51–53 (NGG) contacts substrate. Positions 60 and 64 each coordinate Zn(2+). Substrate-binding positions include Glu64, 93–94 (ND), 119–121 (STS), Ser124, and Gln174. Zn(2+) is bound by residues Gln174 and His182.

It belongs to the SIS family. GmhA subfamily. In terms of assembly, homotetramer. Zn(2+) is required as a cofactor.

It localises to the cytoplasm. It carries out the reaction 2 D-sedoheptulose 7-phosphate = D-glycero-alpha-D-manno-heptose 7-phosphate + D-glycero-beta-D-manno-heptose 7-phosphate. Its pathway is carbohydrate biosynthesis; D-glycero-D-manno-heptose 7-phosphate biosynthesis; D-glycero-alpha-D-manno-heptose 7-phosphate and D-glycero-beta-D-manno-heptose 7-phosphate from sedoheptulose 7-phosphate: step 1/1. In terms of biological role, catalyzes the isomerization of sedoheptulose 7-phosphate in D-glycero-D-manno-heptose 7-phosphate. The sequence is that of Phosphoheptose isomerase from Coxiella burnetii (strain CbuK_Q154) (Coxiella burnetii (strain Q154)).